The following is a 543-amino-acid chain: MADDNGGGGDDYVSEAVRPEGDTHTREEGLSKSRDRDREKDKDKERHRDRDRDRGRDRDRGRDRDLDKDRDRDKDRDRHQRHHRDKREHRDRPDDHDRHRSRDSERRRDRERDGHRRHRSRSRSRSRGRDDHRSRSHSKSKRVSGFDLGPTAQSVLPQFPTIPTPSQLPGSSIPGMFPNMLPFADGQINPLVMQPQAMTQQATRHARRVYVGGLPPSANEQSVAIYFNQVMAAIGGNTAGPGDAVLNVYINHDKKFAFVEMRSVEEASNAMALDGILFEGAPVKVRRPTDYNPSLAAALGPSQPSSNLNLAAVGLTPGSAGGLEGPDRIFVGGLPYYFTEAQVRELLESFGPLRGFDLVKDRETGNSKGYAFCVYQDLNVTDIACAALNGIKMGDKTLTVRRANQGSAQPRPEQENILLQAQQQVQLQKLVYQVGALPTKVVCLTQVVTADELKDDEEYEDIMEDMRLEAGKYGNLVKVVIPRPHPSGEPVSGVGKVFLEYADVDGSTKAKTAMHGRKFGGNPVVAVFYPENKFADEDYDAAA.

The span at 1–10 (MADDNGGGGD) shows a compositional bias: gly residues. The tract at residues 1-171 (MADDNGGGGD…IPTPSQLPGS (171 aa)) is disordered. Basic and acidic residues-rich tracts occupy residues 17-78 (VRPE…DRDR) and 88-114 (EHRD…ERDG). A compositionally biased stretch (basic residues) spans 115–126 (HRRHRSRSRSRS). 3 consecutive RRM domains span residues 207-290 (RRVY…RPTD), 327-405 (DRIF…RANQ), and 446-532 (QVVT…YPEN).

This sequence belongs to the splicing factor SR family.

It is found in the nucleus. Necessary for the splicing of pre-mRNA. The polypeptide is Splicing factor U2af large subunit B (U2AF65B) (Triticum aestivum (Wheat)).